The following is a 76-amino-acid chain: Exodeoxyribonuclease 7 small subunit (76 aa).

Belongs to the XseB family. As to quaternary structure, heterooligomer composed of large and small subunits.

Its subcellular location is the cytoplasm. It carries out the reaction Exonucleolytic cleavage in either 5'- to 3'- or 3'- to 5'-direction to yield nucleoside 5'-phosphates.. Its function is as follows. Bidirectionally degrades single-stranded DNA into large acid-insoluble oligonucleotides, which are then degraded further into small acid-soluble oligonucleotides. The protein is Exodeoxyribonuclease 7 small subunit of Geobacter metallireducens (strain ATCC 53774 / DSM 7210 / GS-15).